The following is a 94-amino-acid chain: Large ribosomal subunit protein bL27 (94 aa).

A propeptide spanning residues 1-9 is cleaved from the precursor; it reads MLKMNLQFF.

Belongs to the bacterial ribosomal protein bL27 family. The N-terminus is cleaved by ribosomal processing cysteine protease Prp.

In Halalkalibacterium halodurans (strain ATCC BAA-125 / DSM 18197 / FERM 7344 / JCM 9153 / C-125) (Bacillus halodurans), this protein is Large ribosomal subunit protein bL27.